The chain runs to 259 residues: Zinc import ATP-binding protein ZnuC (259 aa).

One can recognise an ABC transporter domain in the interval V6 to G223. G38 to S45 lines the ATP pocket. Residues A230–D259 are disordered. Residues T233–D259 are compositionally biased toward basic and acidic residues.

Belongs to the ABC transporter superfamily. Zinc importer (TC 3.A.1.15.5) family. In terms of assembly, the complex is composed of two ATP-binding proteins (ZnuC), two transmembrane proteins (ZnuB) and a solute-binding protein (ZnuA).

Its subcellular location is the cell inner membrane. It carries out the reaction Zn(2+)(out) + ATP(in) + H2O(in) = Zn(2+)(in) + ADP(in) + phosphate(in) + H(+)(in). Its function is as follows. Part of the ABC transporter complex ZnuABC involved in zinc import. Responsible for energy coupling to the transport system. This chain is Zinc import ATP-binding protein ZnuC, found in Alcanivorax borkumensis (strain ATCC 700651 / DSM 11573 / NCIMB 13689 / SK2).